The following is a 268-amino-acid chain: Activator of basal transcription 1 (268 aa).

A coiled-coil region spans residues 6 to 38 (KLVEEQKAAMEEEKEVNAEAAEELEEAEEASCN). In terms of domain architecture, RRM spans 47 to 144 (GIVYLGHVPP…RKRSPFRYDL (98 aa)). Residues 163–193 (AFERQVRRQRLRAEVAQAKRETDFYLRNVEQ) adopt a coiled-coil conformation. The tract at residues 200–242 (ADGDATRPNSSWTFTQRPTEQELRAQKGARPGGRERARLATVQ) is disordered. The span at 206–217 (RPNSSWTFTQRP) shows a compositional bias: polar residues.

The protein belongs to the ESF2/ABP1 family. Interacts with IGHMBP2. Interacts with ESF1/ABTAP.

It localises to the nucleus. It is found in the nucleolus. Functionally, may be a novel TATA-binding protein (TBP) which can function as a basal transcription activator. Can act as a regulator of basal transcription for class II genes. The chain is Activator of basal transcription 1 (Abt1) from Rattus norvegicus (Rat).